We begin with the raw amino-acid sequence, 182 residues long: Large ribosomal subunit protein uL5 (182 aa).

This sequence belongs to the universal ribosomal protein uL5 family. In terms of assembly, part of the 50S ribosomal subunit; part of the 5S rRNA/L5/L18/L25 subcomplex. Contacts the 5S rRNA and the P site tRNA. Forms a bridge to the 30S subunit in the 70S ribosome.

Functionally, this is one of the proteins that bind and probably mediate the attachment of the 5S RNA into the large ribosomal subunit, where it forms part of the central protuberance. In the 70S ribosome it contacts protein S13 of the 30S subunit (bridge B1b), connecting the 2 subunits; this bridge is implicated in subunit movement. Contacts the P site tRNA; the 5S rRNA and some of its associated proteins might help stabilize positioning of ribosome-bound tRNAs. The protein is Large ribosomal subunit protein uL5 of Thermus aquaticus.